The primary structure comprises 192 residues: Der GTPase-activating protein YihI (192 aa).

Residues 1-80 are disordered; that stretch reads MSRTKKTRRI…KAAVKEVKDP (80 aa). Composition is skewed to basic and acidic residues over residues 9 to 25, 37 to 48, and 65 to 80; these read RITDIMPARKADKKPEQ, TRYELDAKAREE, and DPAEQKKAAVKEVKDP.

It belongs to the YihI family. Interacts with Der.

A GTPase-activating protein (GAP) that modifies Der/EngA GTPase function. May play a role in ribosome biogenesis. This Actinobacillus pleuropneumoniae serotype 5b (strain L20) protein is Der GTPase-activating protein YihI.